A 441-amino-acid polypeptide reads, in one-letter code: Glutamate-1-semialdehyde 2,1-aminomutase (441 aa).

An N6-(pyridoxal phosphate)lysine modification is found at Lys270.

This sequence belongs to the class-III pyridoxal-phosphate-dependent aminotransferase family. HemL subfamily. Homodimer. Pyridoxal 5'-phosphate is required as a cofactor.

The protein localises to the cytoplasm. The enzyme catalyses (S)-4-amino-5-oxopentanoate = 5-aminolevulinate. It participates in porphyrin-containing compound metabolism; protoporphyrin-IX biosynthesis; 5-aminolevulinate from L-glutamyl-tRNA(Glu): step 2/2. This is Glutamate-1-semialdehyde 2,1-aminomutase (hemL) from Propionibacterium freudenreichii subsp. freudenreichii.